A 65-amino-acid polypeptide reads, in one-letter code: Large ribosomal subunit protein bL35 (65 aa).

This sequence belongs to the bacterial ribosomal protein bL35 family.

This is Large ribosomal subunit protein bL35 from Chromobacterium violaceum (strain ATCC 12472 / DSM 30191 / JCM 1249 / CCUG 213 / NBRC 12614 / NCIMB 9131 / NCTC 9757 / MK).